A 396-amino-acid chain; its full sequence is CCA-adding enzyme (396 aa).

Residues glycine 32 and arginine 35 each contribute to the ATP site. CTP is bound by residues glycine 32 and arginine 35. Mg(2+) contacts are provided by aspartate 45 and aspartate 47. ATP is bound by residues arginine 116, aspartate 159, arginine 162, arginine 165, and arginine 168. Residues arginine 116, aspartate 159, arginine 162, arginine 165, and arginine 168 each coordinate CTP.

Belongs to the tRNA nucleotidyltransferase/poly(A) polymerase family. Bacterial CCA-adding enzyme type 3 subfamily. In terms of assembly, homodimer. The cofactor is Mg(2+).

The catalysed reaction is a tRNA precursor + 2 CTP + ATP = a tRNA with a 3' CCA end + 3 diphosphate. It carries out the reaction a tRNA with a 3' CCA end + 2 CTP + ATP = a tRNA with a 3' CCACCA end + 3 diphosphate. Its function is as follows. Catalyzes the addition and repair of the essential 3'-terminal CCA sequence in tRNAs without using a nucleic acid template. Adds these three nucleotides in the order of C, C, and A to the tRNA nucleotide-73, using CTP and ATP as substrates and producing inorganic pyrophosphate. tRNA 3'-terminal CCA addition is required both for tRNA processing and repair. Also involved in tRNA surveillance by mediating tandem CCA addition to generate a CCACCA at the 3' terminus of unstable tRNAs. While stable tRNAs receive only 3'-terminal CCA, unstable tRNAs are marked with CCACCA and rapidly degraded. In Lactobacillus delbrueckii subsp. bulgaricus (strain ATCC 11842 / DSM 20081 / BCRC 10696 / JCM 1002 / NBRC 13953 / NCIMB 11778 / NCTC 12712 / WDCM 00102 / Lb 14), this protein is CCA-adding enzyme.